The chain runs to 394 residues: Obg-like ATPase 1 (394 aa).

The region spanning 21 to 285 is the OBG-type G domain; sequence LKAGIVGLAN…MSPEDAEEEL (265 aa). Residue 30 to 35 coordinates ATP; the sequence is NVGKST. The Mg(2+) site is built by Ser34 and Thr55. Thr89 bears the Phosphothreonine mark. A Glycyl lysine isopeptide (Lys-Gly) (interchain with G-Cter in ubiquitin) cross-link involves residue Lys98. Phosphoserine is present on residues Ser116 and Ser119. An ATP-binding site is contributed by Leu233. One can recognise a TGS domain in the interval 306 to 389; it reads DLISFFTCGP…EDGDIIYFRA (84 aa).

Belongs to the TRAFAC class OBG-HflX-like GTPase superfamily. OBG GTPase family. YchF/OLA1 subfamily. As to quaternary structure, monomer. Interacts with the 26S proteasome subunit RPT6. It depends on Mg(2+) as a cofactor.

Its subcellular location is the cytoplasm. Functionally, hydrolyzes ATP, and can also hydrolyze GTP with lower efficiency. Has lower affinity for GTP. The chain is Obg-like ATPase 1 from Saccharomyces cerevisiae (strain ATCC 204508 / S288c) (Baker's yeast).